A 604-amino-acid chain; its full sequence is Glutamine--fructose-6-phosphate aminotransferase [isomerizing] (604 aa).

Cys2 functions as the Nucleophile; for GATase activity in the catalytic mechanism. The region spanning 2–218 is the Glutamine amidotransferase type-2 domain; it reads CGIVGVVGNR…DKELVILTKD (217 aa). SIS domains are found at residues 284–423 and 456–594; these read IITS…ANGK and VQAL…VDKP. Catalysis depends on Lys599, which acts as the For Fru-6P isomerization activity.

Homodimer.

Its subcellular location is the cytoplasm. The enzyme catalyses D-fructose 6-phosphate + L-glutamine = D-glucosamine 6-phosphate + L-glutamate. Functionally, catalyzes the first step in hexosamine metabolism, converting fructose-6P into glucosamine-6P using glutamine as a nitrogen source. The polypeptide is Glutamine--fructose-6-phosphate aminotransferase [isomerizing] (Streptococcus pyogenes serotype M1).